The sequence spans 438 residues: Adenylosuccinate synthetase (438 aa).

GTP is bound by residues 13–19 and 41–43; these read GDEGKGK and GHT. The active-site Proton acceptor is the D14. Residues D14 and G41 each contribute to the Mg(2+) site. IMP-binding positions include 14-17, 39-42, T130, R144, Q225, T240, and R310; these read DEGK and NAGH. H42 functions as the Proton donor in the catalytic mechanism. 306-312 serves as a coordination point for substrate; sequence ATTGRLR. GTP contacts are provided by residues R312, 338–340, and 421–423; these read KLD and STG.

Belongs to the adenylosuccinate synthetase family. Homodimer. It depends on Mg(2+) as a cofactor.

The protein localises to the cytoplasm. The catalysed reaction is IMP + L-aspartate + GTP = N(6)-(1,2-dicarboxyethyl)-AMP + GDP + phosphate + 2 H(+). Its pathway is purine metabolism; AMP biosynthesis via de novo pathway; AMP from IMP: step 1/2. Its function is as follows. Plays an important role in the de novo pathway of purine nucleotide biosynthesis. Catalyzes the first committed step in the biosynthesis of AMP from IMP. The polypeptide is Adenylosuccinate synthetase (Aliivibrio fischeri (strain ATCC 700601 / ES114) (Vibrio fischeri)).